The following is a 484-amino-acid chain: Arginine ADP-riboxanase OspC3 (484 aa).

Residues His143, Gln144, Ser145, Asn155, Lys157, Thr169, Asn172, and Thr173 each contribute to the NAD(+) site. Glu326 is a catalytic residue. ANK repeat units lie at residues 369–398 (MAHQALAYSLGNKKADIALYLLSKFNFTKQ), 413–444 (NLYDVEYLLSKDGANYKVLEYFINNGLVDVNK), and 451–480 (SGDTMLDNAMKSKDSKMIDFLLKNGAILGK).

It belongs to the OspC family. As to quaternary structure, interacts with host calmodulin (CALM1, CALM2 and/or CALM3); specifically interacts with the apo form of calmodulin, preventing calcium-binding.

The protein resides in the secreted. It localises to the host cytoplasm. It catalyses the reaction L-arginyl-[protein] + NAD(+) = ADP-riboxanated L-argininyl-[protein] + nicotinamide + NH4(+) + H(+). With respect to regulation, interaction with host calmodulin (CALM1, CALM2 and/or CALM3) is required to mediate arginine ADP-riboxanation of host caspases. Functionally, ADP-riboxanase effector that inhibits host cell pyroptosis. Acts by mediating arginine ADP-riboxanation of host CASP4/CASP11, blocking CASP4/CASP11 autoprocessing. This prevents CASP4 activation and ability to recognize and cleave GSDMD, thereby inhibiting LPS-induced pyroptosis. ADP-riboxanation takes place in two steps: OspC3 first catalyzes ADP-ribosylation of target Arg, and then initiates a deamination to remove one N-omega group. Independently of its ADP-riboxanase activity, acts as an inhibitor of calcium signaling by inhibiting host calmodulin, preventing activation of the JAK-STAT signaling pathway in response to interferon-beta. Mechanistically, acts by binding to the apo form of calmodulin, preventing calcium-binding and ability to activate host CaMK2 (CAMKII), which is required to stimulate the JAK-STAT signaling pathway in response to interferon-beta. The chain is Arginine ADP-riboxanase OspC3 from Shigella flexneri.